The following is a 147-amino-acid chain: uncharacterized protein (147 aa).

This is an uncharacterized protein from Mycoplasma genitalium (strain ATCC 33530 / DSM 19775 / NCTC 10195 / G37) (Mycoplasmoides genitalium).